A 441-amino-acid polypeptide reads, in one-letter code: 3-phosphoshikimate 1-carboxyvinyltransferase (441 aa).

3 residues coordinate 3-phosphoshikimate: Lys26, Ser27, and Arg31. A phosphoenolpyruvate-binding site is contributed by Lys26. Positions 99 and 127 each coordinate phosphoenolpyruvate. 3-phosphoshikimate contacts are provided by Ser173, Ser174, Gln175, Ser203, Asp320, and Lys347. Gln175 lines the phosphoenolpyruvate pocket. The Proton acceptor role is filled by Asp320. Phosphoenolpyruvate-binding residues include Arg351, Arg393, and Lys423.

Belongs to the EPSP synthase family. In terms of assembly, monomer.

The protein localises to the cytoplasm. The enzyme catalyses 3-phosphoshikimate + phosphoenolpyruvate = 5-O-(1-carboxyvinyl)-3-phosphoshikimate + phosphate. The protein operates within metabolic intermediate biosynthesis; chorismate biosynthesis; chorismate from D-erythrose 4-phosphate and phosphoenolpyruvate: step 6/7. Catalyzes the transfer of the enolpyruvyl moiety of phosphoenolpyruvate (PEP) to the 5-hydroxyl of shikimate-3-phosphate (S3P) to produce enolpyruvyl shikimate-3-phosphate and inorganic phosphate. The polypeptide is 3-phosphoshikimate 1-carboxyvinyltransferase (Janthinobacterium sp. (strain Marseille) (Minibacterium massiliensis)).